Reading from the N-terminus, the 236-residue chain is Small ribosomal subunit protein uS2c (236 aa).

It belongs to the universal ribosomal protein uS2 family.

It localises to the plastid. It is found in the chloroplast. In Lepidium virginicum (Virginia pepperweed), this protein is Small ribosomal subunit protein uS2c (rps2).